The following is a 260-amino-acid chain: HTH-type transcriptional repressor NanR (260 aa).

Residues 1-20 (MNPFDSQSEDASDAIGRSLG) form a disordered region. One can recognise an HTH gntR-type domain in the interval 27–95 (KKLSEMVEEE…NGERARVSRP (69 aa)). The H-T-H motif DNA-binding region spans 55–74 (ERELMAFFNVGRPSVREALA).

It belongs to the NanR family.

Its function is as follows. Transcriptional repressor that controls expression of the genes required for the catabolism of sialic acids. The polypeptide is HTH-type transcriptional repressor NanR (Cronobacter sakazakii (strain ATCC BAA-894) (Enterobacter sakazakii)).